The sequence spans 134 residues: DNA-binding protein inhibitor ID-2 (134 aa).

Ser14 and Ser25 each carry phosphoserine. One can recognise a bHLH domain in the interval 23–75 (SRSKTPVDDPMSLLYNMNDCYSKLKELVPSIPQNKKVSKMEILQHVIDYILDL). The Nuclear export signal signature appears at 106 to 115 (LNTDISILSL).

As to quaternary structure, interacts with GATA4 and NKX2-5. Interacts with NR0B2. Interacts with CLOCK and BMAL1. Interacts with IFI204. Interacts with NEDD9/HEF1. Interacts with ASB4; this interaction promotes ID2 proteasomal degradation. Ubiquitinated in a ASB4-depedent manner, leading to proteasomal degradation. Post-translationally, phosphorylated in vitro by CDK1, PKA and PKC.

Its subcellular location is the cytoplasm. The protein localises to the nucleus. Functionally, transcriptional regulator (lacking a basic DNA binding domain) which negatively regulates the basic helix-loop-helix (bHLH) transcription factors by forming heterodimers and inhibiting their DNA binding and transcriptional activity. Implicated in regulating a variety of cellular processes, including cellular growth, senescence, differentiation, apoptosis, angiogenesis, and neoplastic transformation. Inhibits skeletal muscle and cardiac myocyte differentiation. Regulates the circadian clock by repressing the transcriptional activator activity of the CLOCK-BMAL1 heterodimer. Restricts the CLOCK and BMAL1 localization to the cytoplasm. Plays a role in both the input and output pathways of the circadian clock: in the input component, is involved in modulating the magnitude of photic entrainment and in the output component, contributes to the regulation of a variety of liver clock-controlled genes involved in lipid metabolism. The chain is DNA-binding protein inhibitor ID-2 (ID2) from Sus scrofa (Pig).